The chain runs to 268 residues: Tryptophan synthase alpha chain (268 aa).

Catalysis depends on proton acceptor residues Glu49 and Asp60.

Belongs to the TrpA family. In terms of assembly, tetramer of two alpha and two beta chains.

It carries out the reaction (1S,2R)-1-C-(indol-3-yl)glycerol 3-phosphate + L-serine = D-glyceraldehyde 3-phosphate + L-tryptophan + H2O. It participates in amino-acid biosynthesis; L-tryptophan biosynthesis; L-tryptophan from chorismate: step 5/5. Functionally, the alpha subunit is responsible for the aldol cleavage of indoleglycerol phosphate to indole and glyceraldehyde 3-phosphate. In Salmonella paratyphi A (strain ATCC 9150 / SARB42), this protein is Tryptophan synthase alpha chain.